Consider the following 151-residue polypeptide: 3-dehydroquinate dehydratase (151 aa).

Tyr-26 acts as the Proton acceptor in catalysis. 3 residues coordinate substrate: Asn-75, His-81, and Asp-88. The active-site Proton donor is the His-101. Substrate-binding positions include 102–103 (LS) and Arg-112.

It belongs to the type-II 3-dehydroquinase family. In terms of assembly, homododecamer.

The enzyme catalyses 3-dehydroquinate = 3-dehydroshikimate + H2O. It participates in metabolic intermediate biosynthesis; chorismate biosynthesis; chorismate from D-erythrose 4-phosphate and phosphoenolpyruvate: step 3/7. Its function is as follows. Catalyzes a trans-dehydration via an enolate intermediate. In Shewanella denitrificans (strain OS217 / ATCC BAA-1090 / DSM 15013), this protein is 3-dehydroquinate dehydratase.